Consider the following 543-residue polypeptide: uncharacterized protein (543 aa).

One can recognise a TRAM domain in the interval 1-59 (MLKKNDIVEVEIVDLTHEGAGVAKVDGLVFFVENALPSEKILMRVLKVNKKIGFGKVEK). Gln283, Tyr312, Glu333, and Asp381 together coordinate S-adenosyl-L-methionine. Cys408 serves as the catalytic Nucleophile.

Belongs to the class I-like SAM-binding methyltransferase superfamily. RNA M5U methyltransferase family.

This is an uncharacterized protein from Streptococcus pneumoniae (strain ATCC BAA-255 / R6).